The primary structure comprises 92 residues: Small ribosomal subunit protein uS19 (92 aa).

The protein belongs to the universal ribosomal protein uS19 family.

In terms of biological role, protein S19 forms a complex with S13 that binds strongly to the 16S ribosomal RNA. The sequence is that of Small ribosomal subunit protein uS19 from Rickettsia africae (strain ESF-5).